Reading from the N-terminus, the 343-residue chain is S-adenosylmethionine:tRNA ribosyltransferase-isomerase (343 aa).

This sequence belongs to the QueA family. In terms of assembly, monomer.

The protein localises to the cytoplasm. It catalyses the reaction 7-aminomethyl-7-carbaguanosine(34) in tRNA + S-adenosyl-L-methionine = epoxyqueuosine(34) in tRNA + adenine + L-methionine + 2 H(+). It functions in the pathway tRNA modification; tRNA-queuosine biosynthesis. Its function is as follows. Transfers and isomerizes the ribose moiety from AdoMet to the 7-aminomethyl group of 7-deazaguanine (preQ1-tRNA) to give epoxyqueuosine (oQ-tRNA). The protein is S-adenosylmethionine:tRNA ribosyltransferase-isomerase of Hydrogenobaculum sp. (strain Y04AAS1).